Here is a 168-residue protein sequence, read N- to C-terminus: Photosystem I assembly protein Ycf3 (168 aa).

TPR repeat units follow at residues 35–68, 72–105, and 120–153; these read AFAY…EMDP, SYIL…NPFL, and GEQA…TPDN.

This sequence belongs to the Ycf3 family.

It localises to the plastid membrane. Essential for the assembly of the photosystem I (PSI) complex. May act as a chaperone-like factor to guide the assembly of the PSI subunits. The polypeptide is Photosystem I assembly protein Ycf3 (Cuscuta obtusiflora (Peruvian dodder)).